Consider the following 464-residue polypeptide: Glutamate--tRNA ligase (464 aa).

The short motif at 9-19 is the 'HIGH' region element; it reads PSPTGYLHIGG. Residues 242–246 carry the 'KMSKS' region motif; it reads KISKR. Lys-245 is an ATP binding site.

It belongs to the class-I aminoacyl-tRNA synthetase family. Glutamate--tRNA ligase type 1 subfamily. In terms of assembly, monomer.

Its subcellular location is the cytoplasm. The enzyme catalyses tRNA(Glu) + L-glutamate + ATP = L-glutamyl-tRNA(Glu) + AMP + diphosphate. Functionally, catalyzes the attachment of glutamate to tRNA(Glu) in a two-step reaction: glutamate is first activated by ATP to form Glu-AMP and then transferred to the acceptor end of tRNA(Glu). The protein is Glutamate--tRNA ligase of Neisseria meningitidis serogroup C (strain 053442).